A 516-amino-acid chain; its full sequence is NAD(P)H-quinone oxidoreductase chain 4, chloroplastic (516 aa).

14 consecutive transmembrane segments (helical) span residues 4–24, 37–57, 87–107, 111–131, 134–154, 167–187, 208–228, 242–262, 272–292, 305–325, 330–350, 386–406, 416–436, and 462–482; these read FPWL…IFLL, LCIC…HFQL, IGPI…AWPV, AQLF…SFSS, LLLF…LLSM, FILY…GIGL, ALEV…LPII, HYST…YGLV, AHCL…IYAA, IAYS…SLSD, GAIL…FLAG, LALP…GIIT, ILIA…SLSM, and LFVS…PDFV.

The protein belongs to the complex I subunit 4 family.

The protein resides in the plastid. Its subcellular location is the chloroplast thylakoid membrane. The catalysed reaction is a plastoquinone + NADH + (n+1) H(+)(in) = a plastoquinol + NAD(+) + n H(+)(out). It carries out the reaction a plastoquinone + NADPH + (n+1) H(+)(in) = a plastoquinol + NADP(+) + n H(+)(out). This chain is NAD(P)H-quinone oxidoreductase chain 4, chloroplastic, found in Oenothera argillicola (Appalachian evening primrose).